Consider the following 118-residue polypeptide: Thioredoxin H-type 2 (118 aa).

In terms of domain architecture, Thioredoxin spans Ala-2–Ser-113. Catalysis depends on nucleophile residues Cys-39 and Cys-42. Residues Cys-39 and Cys-42 are joined by a disulfide bond.

The protein belongs to the thioredoxin family. Plant H-type subfamily.

The protein localises to the cytoplasm. Participates in various redox reactions through the reversible oxidation of the active center dithiol to a disulfide. The H form is known to activate a number of cytosolic enzymes. The sequence is that of Thioredoxin H-type 2 from Nicotiana tabacum (Common tobacco).